Here is a 381-residue protein sequence, read N- to C-terminus: S-(hydroxymethyl)glutathione dehydrogenase (381 aa).

Residue Cys49 coordinates Zn(2+). His50 contributes to the NAD(+) binding site. 7 residues coordinate Zn(2+): His71, Glu72, Cys101, Cys104, Cys107, Cys115, and Cys178. NAD(+) contacts are provided by residues 203-208, Asp227, and 298-300; these read GGGIVG and IGV.

Belongs to the zinc-containing alcohol dehydrogenase family. Class-III subfamily. Zn(2+) serves as cofactor.

The enzyme catalyses a primary alcohol + NAD(+) = an aldehyde + NADH + H(+). The catalysed reaction is a secondary alcohol + NAD(+) = a ketone + NADH + H(+). It carries out the reaction S-(hydroxymethyl)glutathione + NADP(+) = S-formylglutathione + NADPH + H(+). It catalyses the reaction S-(hydroxymethyl)glutathione + NAD(+) = S-formylglutathione + NADH + H(+). The enzyme catalyses S-nitrosoglutathione + NADH + H(+) = S-(hydroxysulfenamide)glutathione + NAD(+). In terms of biological role, oxidizes long-chain alcohols and, in the presence of glutathione, is able to oxidize formaldehyde. Also acts as a S-nitroso-glutathione reductase by catalyzing the NADH-dependent reduction of S-nitrosoglutathione, thereby regulating protein S-nitrosylation. This Candida maltosa (Yeast) protein is S-(hydroxymethyl)glutathione dehydrogenase (FDH1).